The sequence spans 210 residues: NDR1/HIN1-like protein 12 (210 aa).

Residues 23–43 (GVIIGFIIIVLITIFLVWIIL) form a helical membrane-spanning segment. An N-linked (GlcNAc...) asparagine glycan is attached at Asn-61.

As to quaternary structure, may form oligomers or be a component of larger protein complex in plasma membranes. Expressed in leaves, stems and flowers, and, to a lower extent, in siliques and roots.

Its subcellular location is the cell membrane. Its function is as follows. May play a role in plant immunity. This chain is NDR1/HIN1-like protein 12, found in Arabidopsis thaliana (Mouse-ear cress).